A 69-amino-acid polypeptide reads, in one-letter code: MKRQKRDRFQRAYVHGYKAGMTGRSRDDCPSQDINLREYWMSGWREGRGDQWAGMTGISGIHKNPMVLS.

Belongs to the ribosome modulation factor family.

The protein localises to the cytoplasm. During stationary phase, converts 70S ribosomes to an inactive dimeric form (100S ribosomes). This Chromohalobacter salexigens (strain ATCC BAA-138 / DSM 3043 / CIP 106854 / NCIMB 13768 / 1H11) protein is Ribosome modulation factor.